The primary structure comprises 708 residues: Probable GTP diphosphokinase RSH3, chloroplastic (708 aa).

2 disordered regions span residues 1-50 and 109-134; these read MSLP…AAGG and HSPV…SWLA. The N-terminal 58 residues, 1 to 58, are a transit peptide targeting the chloroplast; sequence MSLPAISLYTSPPPGAVYSSEFDPSSRGSSPPCSTAPPSTSHRPPAAAGGLSCLFSSP. Composition is skewed to low complexity over residues 29–41 and 118–131; these read SSPP…PSTS and PSSS…PPAS. Residues 233-337 form the HD domain; the sequence is YLQHCVETAV…IKLADRVHNM (105 aa).

Belongs to the RelA/SpoT family.

The protein resides in the plastid. It is found in the chloroplast. It catalyses the reaction GTP + ATP = guanosine 3'-diphosphate 5'-triphosphate + AMP. In terms of biological role, probable ppGpp (guanosine 3'-diphosphate 5'-diphosphate) synthetase that may be involved in a rapid plant ppGpp-mediated response to pathogens and other stresses. The polypeptide is Probable GTP diphosphokinase RSH3, chloroplastic (RSH3) (Oryza sativa subsp. japonica (Rice)).